A 361-amino-acid chain; its full sequence is Spermidine/putrescine import ATP-binding protein PotA (361 aa).

The region spanning Leu4–Ile234 is the ABC transporter domain. Gly36–Thr43 lines the ATP pocket.

Belongs to the ABC transporter superfamily. Spermidine/putrescine importer (TC 3.A.1.11.1) family. The complex is composed of two ATP-binding proteins (PotA), two transmembrane proteins (PotB and PotC) and a solute-binding protein (PotD).

The protein localises to the cell inner membrane. It catalyses the reaction ATP + H2O + polyamine-[polyamine-binding protein]Side 1 = ADP + phosphate + polyamineSide 2 + [polyamine-binding protein]Side 1.. Its function is as follows. Part of the ABC transporter complex PotABCD involved in spermidine/putrescine import. Responsible for energy coupling to the transport system. The chain is Spermidine/putrescine import ATP-binding protein PotA from Nitrosomonas europaea (strain ATCC 19718 / CIP 103999 / KCTC 2705 / NBRC 14298).